We begin with the raw amino-acid sequence, 102 residues long: Small ribosomal subunit protein uS10 (102 aa).

Belongs to the universal ribosomal protein uS10 family. As to quaternary structure, part of the 30S ribosomal subunit.

Involved in the binding of tRNA to the ribosomes. The chain is Small ribosomal subunit protein uS10 from Malacoplasma penetrans (strain HF-2) (Mycoplasma penetrans).